We begin with the raw amino-acid sequence, 94 residues long: MAFNVITFLQLAVFVVILFNINLHSASAGSKGQRASQVSETSITAEFCDTSCTQGTDKTWSGCSGDCFCVHVGNDTEGRCMRWDGDYPSAEEEE.

An N-terminal signal peptide occupies residues 1–28; that stretch reads MAFNVITFLQLAVFVVILFNINLHSASA. 3 disulfide bridges follow: Cys48–Cys67, Cys52–Cys69, and Cys63–Cys80. N-linked (GlcNAc...) asparagine glycosylation occurs at Asn74.

It localises to the secreted. In terms of biological role, salivary chemokine-binding protein which binds to host chemokines CXCL1, CXCL2, CXCL3, CXCL5, CXCL6, CXCL10, CXCL12 and CXCL13. The protein is Evasin P1086 of Ixodes ricinus (Common tick).